The primary structure comprises 508 residues: Photosystem II CP47 reaction center protein (508 aa).

Helical transmembrane passes span 21-36 (AVHI…WAGS), 101-115 (IVFS…IWHW), 140-156 (GIHL…FGAF), 203-218 (IAAG…FHLS), 237-252 (VLSS…AFVV), and 457-472 (SFAL…HGAR).

This sequence belongs to the PsbB/PsbC family. PsbB subfamily. PSII is composed of 1 copy each of membrane proteins PsbA, PsbB, PsbC, PsbD, PsbE, PsbF, PsbH, PsbI, PsbJ, PsbK, PsbL, PsbM, PsbT, PsbX, PsbY, PsbZ, Psb30/Ycf12, at least 3 peripheral proteins of the oxygen-evolving complex and a large number of cofactors. It forms dimeric complexes. The cofactor is Binds multiple chlorophylls. PSII binds additional chlorophylls, carotenoids and specific lipids..

The protein resides in the plastid. It localises to the chloroplast thylakoid membrane. Functionally, one of the components of the core complex of photosystem II (PSII). It binds chlorophyll and helps catalyze the primary light-induced photochemical processes of PSII. PSII is a light-driven water:plastoquinone oxidoreductase, using light energy to abstract electrons from H(2)O, generating O(2) and a proton gradient subsequently used for ATP formation. In Daucus carota (Wild carrot), this protein is Photosystem II CP47 reaction center protein.